We begin with the raw amino-acid sequence, 299 residues long: MKRYLITGGTGMVGSHLVNEIKQTDAHITILTRQDKTSNHPKITYINWSKEGWQHQVPDIDIVINLAGATLNKRWTSSHKQAMMLSRIQSTQTLFELFETREHKPEVLFNASAMGYYPPDLFTSYTELYRTLPFDFLSEIVYQWERFANKFKQFGTRVVLGRFGLILSDDGGALEMMELPYRLYVGGKLGSGRQWYSWIHIDDLIRGILFTINHDNAEGPFNLTAPIPERQNLFGYTLARAMHKPHETWAPKLILRAVLGQMSTVILDTQKVLPNKLHALGFEFKYNNLRNALDDLIKA.

This sequence belongs to the NAD(P)-dependent epimerase/dehydratase family. SDR39U1 subfamily.

The protein is Epimerase family protein SERP0438 of Staphylococcus epidermidis (strain ATCC 35984 / DSM 28319 / BCRC 17069 / CCUG 31568 / BM 3577 / RP62A).